Consider the following 357-residue polypeptide: Spermatogenesis- and oogenesis-specific basic helix-loop-helix-containing protein 1 (357 aa).

Residues 1-14 (MASGGHERANEDYR) are compositionally biased toward basic and acidic residues. Positions 1–40 (MASGGHERANEDYRVSGITGCSKTPQPETQDSLQTSSQSS) are disordered. Positions 19-31 (TGCSKTPQPETQD) are enriched in polar residues. The region spanning 54–105 (PSLRRNVVSERERRRRISLSCEHLRALLPQFDGRREDMASVLEMSVYFLQLA) is the bHLH domain. Residues 145 to 210 (KPDSGIAKPS…EPESSSLGPG (66 aa)) form a disordered region. Low complexity predominate over residues 200–209 (SEPESSSLGP).

As to quaternary structure, forms both hetero- and homodimers with SOHLH2. In males, it is mainly expressed in testis, while in females it is mainly expressed in ovary. In testis, it is exclusively expressed in spermatogonia, with a preference for prespermatogonia and type A spermatogonia. In ovary, it is detected in germ cell cysts, primordial follicles, and primary follicles but is undetectable by the secondary follicle stage (at protein level). Expressed in the majority of spermatogonia in adult animals, but not in the most undifferentiated spermatogonial population.

The protein localises to the cytoplasm. The protein resides in the nucleus. In terms of biological role, transcription regulator of both male and female germline differentiation. Suppresses genes involved in spermatogonial stem cells maintenance, and induces genes important for spermatogonial differentiation. Coordinates oocyte differentiation without affecting meiosis I. The polypeptide is Spermatogenesis- and oogenesis-specific basic helix-loop-helix-containing protein 1 (Sohlh1) (Mus musculus (Mouse)).